We begin with the raw amino-acid sequence, 174 residues long: NAD(P)H-quinone oxidoreductase subunit J, chloroplastic (174 aa).

It belongs to the complex I 30 kDa subunit family. As to quaternary structure, NDH is composed of at least 16 different subunits, 5 of which are encoded in the nucleus.

It localises to the plastid. It is found in the chloroplast thylakoid membrane. The catalysed reaction is a plastoquinone + NADH + (n+1) H(+)(in) = a plastoquinol + NAD(+) + n H(+)(out). The enzyme catalyses a plastoquinone + NADPH + (n+1) H(+)(in) = a plastoquinol + NADP(+) + n H(+)(out). NDH shuttles electrons from NAD(P)H:plastoquinone, via FMN and iron-sulfur (Fe-S) centers, to quinones in the photosynthetic chain and possibly in a chloroplast respiratory chain. The immediate electron acceptor for the enzyme in this species is believed to be plastoquinone. Couples the redox reaction to proton translocation, and thus conserves the redox energy in a proton gradient. The chain is NAD(P)H-quinone oxidoreductase subunit J, chloroplastic from Mesostigma viride (Green alga).